Here is a 230-residue protein sequence, read N- to C-terminus: Protein FAM3A (230 aa).

The signal sequence occupies residues M1–G33. 2 cysteine pairs are disulfide-bonded: C59–C87 and C65–C222. Positions E68–R226 constitute a GG-type lectin domain.

Belongs to the FAM3 family. In similar amounts in testis, pancreas, adrenal, placenta, brain, fetal brain, liver, kidney, skeletal muscle and heart.

The protein localises to the secreted. In terms of biological role, may act as a defensin against invading fungal microorganisms. This Homo sapiens (Human) protein is Protein FAM3A (FAM3A).